The chain runs to 501 residues: UPF0616 protein C1687.04 (501 aa).

It belongs to the UPF0616 family.

The protein resides in the cytoplasm. The protein localises to the nucleus. The chain is UPF0616 protein C1687.04 from Schizosaccharomyces pombe (strain 972 / ATCC 24843) (Fission yeast).